Consider the following 284-residue polypeptide: uncharacterized protein (284 aa).

To E.coli YnjA.

This is an uncharacterized protein from Mycobacterium tuberculosis (strain CDC 1551 / Oshkosh).